A 1023-amino-acid polypeptide reads, in one-letter code: Probable histidine kinase 3 (1023 aa).

Residues Met1–Trp80 are Cytoplasmic-facing. The chain crosses the membrane as a helical span at residues Trp81 to Phe101. Over Met102–Pro387 the chain is Extracellular. One can recognise a CHASE domain in the interval Thr151–Gly352. A helical transmembrane segment spans residues Trp388–Phe408. The Cytoplasmic segment spans residues Gln409–Glu1023. Residues Thr445 to Arg715 form the Histidine kinase domain. Residue His448 is modified to Phosphohistidine; by autocatalysis. 2 Response regulatory domains span residues Asn732–Leu854 and Gln880–Phe1016. Asp783 bears the 4-aspartylphosphate mark. Residues Leu812–Glu831 form a disordered region. Residues Ser817–Asp827 are compositionally biased toward polar residues. A 4-aspartylphosphate modification is found at Asp930.

Post-translationally, activation probably requires a transfer of a phosphate group between a His in the transmitter domain and an Asp of the receiver domain.

Its subcellular location is the cell membrane. The enzyme catalyses ATP + protein L-histidine = ADP + protein N-phospho-L-histidine.. Cytokinin receptor related to bacterial two-component regulators. Functions as a histidine kinase and transmits the stress signal to a downstream MAPK cascade. This is Probable histidine kinase 3 from Oryza sativa subsp. indica (Rice).